A 421-amino-acid polypeptide reads, in one-letter code: Gamma-glutamyl phosphate reductase (421 aa).

This sequence belongs to the gamma-glutamyl phosphate reductase family.

Its subcellular location is the cytoplasm. It carries out the reaction L-glutamate 5-semialdehyde + phosphate + NADP(+) = L-glutamyl 5-phosphate + NADPH + H(+). It functions in the pathway amino-acid biosynthesis; L-proline biosynthesis; L-glutamate 5-semialdehyde from L-glutamate: step 2/2. In terms of biological role, catalyzes the NADPH-dependent reduction of L-glutamate 5-phosphate into L-glutamate 5-semialdehyde and phosphate. The product spontaneously undergoes cyclization to form 1-pyrroline-5-carboxylate. In Stutzerimonas stutzeri (strain A1501) (Pseudomonas stutzeri), this protein is Gamma-glutamyl phosphate reductase.